The sequence spans 189 residues: Ribosome maturation factor RimM (189 aa).

The segment covering Met1–Thr16 has biased composition (polar residues). The interval Met1–Asp21 is disordered. Positions Glu118–Tyr189 constitute a PRC barrel domain.

The protein belongs to the RimM family. Binds ribosomal protein uS19.

It localises to the cytoplasm. An accessory protein needed during the final step in the assembly of 30S ribosomal subunit, possibly for assembly of the head region. Essential for efficient processing of 16S rRNA. May be needed both before and after RbfA during the maturation of 16S rRNA. It has affinity for free ribosomal 30S subunits but not for 70S ribosomes. This Thiobacillus denitrificans (strain ATCC 25259 / T1) protein is Ribosome maturation factor RimM.